The primary structure comprises 83 residues: Large ribosomal subunit protein eL43 (83 aa).

Residues Cys38, Cys41, Cys56, and Cys59 each coordinate Zn(2+). A C4-type zinc finger spans residues 38 to 59 (CKKCGKKAVKRSGTGIWECRHC).

The protein belongs to the eukaryotic ribosomal protein eL43 family. Putative zinc-binding subfamily. In terms of assembly, part of the 50S ribosomal subunit. Zn(2+) serves as cofactor.

In terms of biological role, binds to the 23S rRNA. This Archaeoglobus fulgidus (strain ATCC 49558 / DSM 4304 / JCM 9628 / NBRC 100126 / VC-16) protein is Large ribosomal subunit protein eL43.